Consider the following 284-residue polypeptide: Small ribosomal subunit protein uS2 (284 aa).

It belongs to the universal ribosomal protein uS2 family.

This Mycoplasma genitalium (strain ATCC 33530 / DSM 19775 / NCTC 10195 / G37) (Mycoplasmoides genitalium) protein is Small ribosomal subunit protein uS2 (rpsB).